Reading from the N-terminus, the 354-residue chain is Histidinol-phosphate aminotransferase (354 aa).

The residue at position 215 (lysine 215) is an N6-(pyridoxal phosphate)lysine.

Belongs to the class-II pyridoxal-phosphate-dependent aminotransferase family. Histidinol-phosphate aminotransferase subfamily. As to quaternary structure, homodimer. Pyridoxal 5'-phosphate is required as a cofactor.

The enzyme catalyses L-histidinol phosphate + 2-oxoglutarate = 3-(imidazol-4-yl)-2-oxopropyl phosphate + L-glutamate. The protein operates within amino-acid biosynthesis; L-histidine biosynthesis; L-histidine from 5-phospho-alpha-D-ribose 1-diphosphate: step 7/9. The chain is Histidinol-phosphate aminotransferase from Vesicomyosocius okutanii subsp. Calyptogena okutanii (strain HA).